Reading from the N-terminus, the 179-residue chain is Proteasome chaperone 3 (179 aa).

Belongs to the PSMG3 family. As to quaternary structure, component of the 20S proteasome chaperone. Forms a heterodimer with POC4 that binds to proteasome precursors. Interacts with POP2.

Involved in 20S proteasome assembly, facilitating the alpha-ring formation. The chain is Proteasome chaperone 3 (IRC25) from Saccharomyces cerevisiae (strain ATCC 204508 / S288c) (Baker's yeast).